A 199-amino-acid polypeptide reads, in one-letter code: MVKVKFCGIASLEDAILAEKLGADFIGFVTDTASPRFVKKDFIGFVRRYVEIPTVEVIVKGNVSESIDKTKADLIQIHRVLTRRELDEIHMYRKKVILYVPSSDMYQEYFRSVISMGFNVLVDSEIKGSKVNLDLARGWAKEYEIGIGGGISPDNLHDFLSINPKWIDVSSGIEKYKGKKDPSKMLKIIEGVRKWKYTQ.

The protein belongs to the TrpF family.

It carries out the reaction N-(5-phospho-beta-D-ribosyl)anthranilate = 1-(2-carboxyphenylamino)-1-deoxy-D-ribulose 5-phosphate. Its pathway is amino-acid biosynthesis; L-tryptophan biosynthesis; L-tryptophan from chorismate: step 3/5. This is N-(5'-phosphoribosyl)anthranilate isomerase from Sulfolobus acidocaldarius (strain ATCC 33909 / DSM 639 / JCM 8929 / NBRC 15157 / NCIMB 11770).